The primary structure comprises 222 residues: UPF0128 protein PYRAB08320 (222 aa).

The protein belongs to the UPF0128 family.

The chain is UPF0128 protein PYRAB08320 from Pyrococcus abyssi (strain GE5 / Orsay).